Consider the following 179-residue polypeptide: RNA polymerase sigma-E factor (179 aa).

Positions 36–49 (DLLQTALVRTYGRW) match the Polymerase core binding motif. Residues 130 to 149 (TEETAAALGMSAGTVKSTLH) constitute a DNA-binding region (H-T-H motif).

This sequence belongs to the sigma-70 factor family. ECF subfamily.

It localises to the cytoplasm. In terms of biological role, sigma factors are initiation factors that promote the attachment of RNA polymerase to specific initiation sites and are then released. This sigma factor is required for normal cell wall integrity; it is recruited by RNA polymerase to transcribe genes with cell wall-related functions. The protein is RNA polymerase sigma-E factor (sigE) of Streptomyces avermitilis (strain ATCC 31267 / DSM 46492 / JCM 5070 / NBRC 14893 / NCIMB 12804 / NRRL 8165 / MA-4680).